The primary structure comprises 90 residues: Small ribosomal subunit protein uS15 (90 aa).

This sequence belongs to the universal ribosomal protein uS15 family. Part of the 30S ribosomal subunit. Forms a bridge to the 50S subunit in the 70S ribosome, contacting the 23S rRNA.

In terms of biological role, one of the primary rRNA binding proteins, it binds directly to 16S rRNA where it helps nucleate assembly of the platform of the 30S subunit by binding and bridging several RNA helices of the 16S rRNA. Its function is as follows. Forms an intersubunit bridge (bridge B4) with the 23S rRNA of the 50S subunit in the ribosome. The sequence is that of Small ribosomal subunit protein uS15 from Helicobacter pylori (strain P12).